Reading from the N-terminus, the 403-residue chain is MSAAARIAPQSAAVAAPAPATTAASAIAKAPSADVQSELDRAALEALELDSDVITSVRLDGLALTKIVKHCRDAHPASASGALLGMDLGGTLEISNVFALPNPGRSNSERDEEEDRSSRNATRYTSDMVRLLRDVNADANPVGLYQGCFLGAFLNSSVIDGLAAITGLVERDGAGSRGKGVLIVHDLAQSAQGNTSVKAYRLSPSFVDAHKKGKFHTQSLIDHKLTFSNILIEIPVSLRNTALLDAFLSSISTPSAPGPSIVQPSTSDLLRNPPSAALAPSYTSLNLALEPVLASSLESTLEIMDEHAAEAGNVGFQARQLAREKAKADAYLARKKAENAAREAQGLAPLPIEDVNRLFKIPAEPSRLEATLLLGQIDSSARRLAETAALGVIQLNAAKTGAV.

In terms of domain architecture, MPN spans 57 to 206; the sequence is VRLDGLALTK…VKAYRLSPSF (150 aa). A disordered region spans residues 99–122; it reads ALPNPGRSNSERDEEEDRSSRNAT.

Belongs to the eIF-3 subunit H family. Component of the eukaryotic translation initiation factor 3 (eIF-3) complex.

It is found in the cytoplasm. Its function is as follows. Component of the eukaryotic translation initiation factor 3 (eIF-3) complex, which is involved in protein synthesis of a specialized repertoire of mRNAs and, together with other initiation factors, stimulates binding of mRNA and methionyl-tRNAi to the 40S ribosome. The eIF-3 complex specifically targets and initiates translation of a subset of mRNAs involved in cell proliferation. This Mycosarcoma maydis (Corn smut fungus) protein is Eukaryotic translation initiation factor 3 subunit H.